The primary structure comprises 84 residues: Exodeoxyribonuclease 7 small subunit (84 aa).

Belongs to the XseB family. In terms of assembly, heterooligomer composed of large and small subunits.

It localises to the cytoplasm. It catalyses the reaction Exonucleolytic cleavage in either 5'- to 3'- or 3'- to 5'-direction to yield nucleoside 5'-phosphates.. In terms of biological role, bidirectionally degrades single-stranded DNA into large acid-insoluble oligonucleotides, which are then degraded further into small acid-soluble oligonucleotides. This Haemophilus influenzae (strain 86-028NP) protein is Exodeoxyribonuclease 7 small subunit.